The sequence spans 3419 residues: MAKYGHLEASPDDGQNQFSDIIKSRSDEHNDVQKKTFTKWINARFSKSGKPPINDMFSDLKDGRKLLDLLEGLTGTSLPKERGSTRVHALNNVNRVLQVLHQNNVELVNIGGTDIVDGNPKLTLGLLWSIILHWQVKDVMKDIMSDLQQTNSEKILLSWVRQTTRPYSQVNVLNFTTSWTDGLAFNAVLHRHKPDLFSWDRVVKMSPTERLEHAFSKAHTYLGIEKLLDPEDVAVQLPDKKSIIMYLTSLFEVLPQQVTIDAIREVETLPRKYKKECEGEEINIQSAVLTEEGQSPRAETPSTVTEVDMDLDSYQIALEEVLTWLLSAEDTFQEQDDISDDVEDVKEQFATHETFMMELTAHQSSVGSVLQAGNQLMTQGTLSDEEEFEIQEQMTLLNARWEALRVESMERQSRLHDALMELQKKQLQQLSGWLTLTEERIQKMESLPVGDDLPSLQNLLEEHKSLQSDLEAEQVKVNSLTHMVVIVDENSGESATAVLEDQLQKLGERWTAVCRWTEERWNRLQEINILWQELLEEQCLLEAWLTEKEEALNKVQTGNFKDQKELGVSVRRLAILKEDMEMKRQTLDQLSEIGQDVGQLLSNPKASEKMNSDSEELTQRWDSLVQRLEDSSNQVTQAVAKLGMSQIPQKDLLETVHVREQGMIKKPKQELPPPPPPKKRQIHVDVEAKKKFDATSAELQSWILRSKAALQNTEMNEYKKSQETSGVRKKWKGLEKEQKEKIPQLDELNQTGQILQEQMGKEGLLAEEINDVLERVLLEWKMISQQLEDLGRKIQLQEDINAYFRQLDALEKTIRAKEEWLRDASFSESPQRSLPSLKDSCQRELTDLLGLHPRIEILCASCSALRSQPSVPGFVQQGFDDLRRHYQAVQKALEEYQQQLENELKSQPEPAYLDTLNTLKKMLSESEKAAQASLSALNDPSAVEQALQEKKALDETLENQKPTLHKLSEETKALEKNMLPDVGKTYRQEFDDAQGKWNKVKTKVSRDLRSLEEIIPRLRDFKADSEVIEKWTNGVKDFLMKEQAAQGDTTALQRQLDQCTTFANEIETIESSLKNLRDIETSLQRCPVTGVKTWVQTRLADYQSQLEKFSQEIDIQKSRLSDSQEKAMNLKKDLAEMQEWMAQAEEDYLERDFEYKSPEELESAVEEMKRAKEDVLQKEVRVKILKDSIKLVAARVPSGGQELTSEFNEVLESYQLLCNRIRGKCHTLEEVWSCWVELLHYLDLETSWLNTLEERMQSTEALPERAEAVHDALESLESVLRHPADNRTQIRELGQTLIDGGILDDIISEKLEAFNSRYEELSHLAESKQISLEKQLQVLRETDHMLQVLKESLGELDKQLTTYLTDRIDAFQLPQEAQKIQAEISAHELTLEELKKNVRPQPPTSPEGRTTRGGSQMDLLQRKLREVSTKFQLFQKPANFEQRMLDCKRVLDGVKAELHVLSVKDVDPDVIQTHLDKCMKLYKTLSEVKLEVETVIKTGRHIVQKQQTDNPKGMDEQLTSLKVLYNDLGAQVTEGKQDLERASQLSRKLKKEAAILSEWLSTTEAELVQKSTSEGVIGDLDTEISWAKNILKDLERRKVDLNAITESSAALQHLVVGSESVLEDTLCVLNAGWSRVRTWTEDWRNTLLNHQNQLEVFDGHVAHISTWLYQAEALLDEIEKKPASKQEEIVKRLLSELSDASIQVENVREQAIVLVNARGSSSRELVEPKLAELSKNFEKVSQHINSAQMLIGQDPAGTVEAVGPFSDLESLESDIENMLKVVEKHLDPSNDEKMDEERAQIEEVLQRGEHLLHEPMEDSKKEKIRLQLLLLHTRYNKIKAIPQRKTIPLSSGIMSSALPADYLVEINKILLTLDDIELSLNIPELNTTVYEDFSFQEDSLKRIKDQLDRLGEQLAAVHEKQPDVILEASGPEAIQIRDMLSQLNAKWDRVNRLYSDRRGSFARAVEEWKQFHCDLDDLTQWLSEAEDLLVGTCAPDGSLDLEKARTHQLELEDGLSSHQPCLIDVNQKGEDIVQRLRPSDASFLKDKLASLNQRWSALVAEVKDLQPRLKGESKQVSGYRKRLDEVVCWLTKVENAVQKRSTPDPEENPWELTDLAQEMDAQAENIKWLNRAELEMLSDKNLSLCERDNLSESLRNVNTMWTKICREVPSLLKTRTQDPCSAPQTRIAAHPNVQKVALVSSASDAPLRGPEISVPADLDKTITELADWLVLIDQMLKSNIVTVGDVKEINKTVSRMKITKADLEQRHPQLDFVFTLAQNLKNKASSSDLRTAITEKLEKLKTQWESTQHGVELRRQQLEDMVVDSLQWDDHREETEELMRKHEARFYMLQQARRDPLSKQVSDNQLLLQELGSGDGVIMAFDNVLQKLLEEYSSDDTRNVEETTEYLKTSWINLKQSIADRQSALEAELRTVQTSRRDLENFVKWLQEAETTANVLADASQRENALQDSVLARQLRQQMLDIQAEIDAHNDIFKSIDGNRQKMVKALGNSEEATMLQHRLDDMNQRWNDLKAKSASIRAHLEASAEKWNRLLASLEELIKWLNMKDEELKKQMPIGGDVPALQLQYDHCKVLRRELKEKEYSVLNAVDQARVFLADQPIEAPEEPRRNPQSKTELTPEERAQKIAKAMRKQSSEVREKWESLNAVTSTWQKQVGKALEKLRDLQGAVDDLDADMKEVEAVRNGWKPVGDLLIDSLQDHIEKTLAFREEIAPINLKVKTMNDLSSQLSPLDLHPSPKMSRQLDDLNMRWKLLQVSVEDRLKQLQEAHRDFGPSSQHFLSTSVQLPWQRSISHNKVPYYINHQTQTTCWDHPKMTELFQSLGDLNNVRFSAYRTAIKIRRLQKALCLDLLELNTTNEVFKQHKLNQNDQLLSVPDVINCLTTTYDGLEQLHKDLVNVPLCVDMCLNWLLNVYDTGRTGKIRVQSLKIGLMSLSKGLLEEKYRCLFKEVAGPTEMCDQRQLGLLLHDAIQIPRQLGEVAAFGGSNIEPSVRSCFQQNNNKPEISVKEFIDWMRLEPQSMVWLPVLHRVAAAETAKHQAKCNICKECPIVGFRYRSLKHFNYDVCQSCFFSGRTAKGHKLHYPMVEYCIPTTSGEDVRDFTKVLKNKFRSKKYFAKHPRLGYLPVQTVLEGDNLETPITLISMWPEHYDPSQSPQLFHDDTHSRIEQYATRLAQMERTNGSFLTDSSSTTGSVEDEHALIQQYCQTLGGESPVSQPQSPAQILKSVEKEERGELERIIADLEEEQRNLQVEYEQLKEQHLRRGLPLGSPPDSIVSPYHTSEDSELIAEAKLLRQHKGRLEARMQILEDHNKQLESQLHRLRQLLEQPDSDSRINGVSPWASPQHPSLSYSLDPDPGPQSHQAASEDLLAPPHDTSTDLTDVMEQLNSTFPSCSPNVPSRPQAI.

Residues 1 to 246 form an actin-binding region; sequence MAKYGHLEAS…LPDKKSIIMY (246 aa). Tyr4 is modified (phosphotyrosine). Ser10 carries the post-translational modification Phosphoserine. Calponin-homology (CH) domains are found at residues 31-135 and 150-255; these read DVQK…LHWQ and TNSE…EVLP. The segment at 268-905 is interaction with SYNM; sequence TLPRKYKKEC…YQQQLENELK (638 aa). Residue Ser295 is modified to Phosphoserine. 17 Spectrin repeats span residues 312–416, 421–525, 532–636, 690–795, 801–901, 910–1012, 1019–1121, 1128–1229, 1236–1333, 1335–1436, 1438–1540, 1547–1648, 1653–1747, 1748–1840, 1841–1958, 1969–2070, and 2077–2176; these read DSYQ…SRLH, ELQK…NRLQ, QELL…NQVT, KKFD…RKIQ, NAYF…QQLE, PAYL…RSLE, RDFK…SRLS, MNLK…HTLE, VELL…ISLE, QLQV…LFQK, ANFE…QDLE, RKLK…NTLL, QLEV…INSA, QMLI…KIKA, IPQR…SDRR, KQFH…PRLK, and SGYR…KTRT. An interaction with SYNM region spans residues 1336–1761; sequence LQVLRETDHM…GQDPAGTVEA (426 aa). Ser1998 bears the Phosphoserine mark. Ser2201 carries the phosphoserine modification. Spectrin repeat units follow at residues 2216–2319, 2336–2426, 2433–2542, 2549–2674, and 2681–2783; these read ADLD…QQLE, EELM…SALE, QTSR…AHLE, NRLL…KQVG, and RDLQ…KQLQ. The interval 2616 to 2640 is disordered; sequence DQPIEAPEEPRRNPQSKTELTPEER. Residues 2785–3152 are interaction with SYNM; that stretch reads AHRDFGPSSQ…TVLEGDNLET (368 aa). The 34-residue stretch at 2799–2832 folds into the WW domain; sequence TSVQLPWQRSISHNKVPYYINHQTQTTCWDHPKM. Residues 3052 to 3108 form a ZZ-type; degenerate zinc finger; the sequence is KHQAKCNICKECPIVGFRYRSLKHFNYDVCQSCFFSGRTAKGHKLHYPMVEYCIPTT. 4 residues coordinate Zn(2+): Cys3057, Cys3060, Cys3081, and Cys3084. Disordered stretches follow at residues 3277 to 3296 and 3344 to 3395; these read RRGL…YHTS and DSDS…TDLT. Ser3284 is modified (phosphoserine).

Homodimer. Interacts with the syntrophins SNTA1; SNTB1 and SNTB2. Interacts with SYNM. Interacts (via its WWW and ZZ domains) with DAG1 (via the PPXY motif of betaDAG1); the interaction is inhibited by the tyrosine phosphorylation of the PPXY motif of DAG1. Interacts with DTNB. Interacts with PGM5.

The protein resides in the postsynaptic cell membrane. The protein localises to the cytoplasm. It is found in the cytoskeleton. In terms of biological role, may play a role in anchoring the cytoskeleton to the plasma membrane. This is Utrophin from Rattus norvegicus (Rat).